The sequence spans 340 residues: Phospho-N-acetylmuramoyl-pentapeptide-transferase (340 aa).

The next 9 membrane-spanning stretches (helical) occupy residues 24 to 44, 69 to 89, 95 to 115, 129 to 149, 156 to 176, 196 to 216, 235 to 255, 260 to 280, and 316 to 336; these read VPFG…LPVL, TMGG…GSGW, AVAL…WLVI, LLLQ…QGIP, GIGA…VLVG, ALVL…LVAF, LFMG…LALL, WALA…ILQV, and VVGC…AWWH.

It belongs to the glycosyltransferase 4 family. MraY subfamily. Mg(2+) is required as a cofactor.

The protein resides in the cell inner membrane. The catalysed reaction is UDP-N-acetyl-alpha-D-muramoyl-L-alanyl-gamma-D-glutamyl-meso-2,6-diaminopimeloyl-D-alanyl-D-alanine + di-trans,octa-cis-undecaprenyl phosphate = di-trans,octa-cis-undecaprenyl diphospho-N-acetyl-alpha-D-muramoyl-L-alanyl-D-glutamyl-meso-2,6-diaminopimeloyl-D-alanyl-D-alanine + UMP. It functions in the pathway cell wall biogenesis; peptidoglycan biosynthesis. Functionally, catalyzes the initial step of the lipid cycle reactions in the biosynthesis of the cell wall peptidoglycan: transfers peptidoglycan precursor phospho-MurNAc-pentapeptide from UDP-MurNAc-pentapeptide onto the lipid carrier undecaprenyl phosphate, yielding undecaprenyl-pyrophosphoryl-MurNAc-pentapeptide, known as lipid I. In Synechococcus sp. (strain JA-3-3Ab) (Cyanobacteria bacterium Yellowstone A-Prime), this protein is Phospho-N-acetylmuramoyl-pentapeptide-transferase.